Reading from the N-terminus, the 98-residue chain is Integration host factor subunit beta (98 aa).

Belongs to the bacterial histone-like protein family. As to quaternary structure, heterodimer of an alpha and a beta chain.

In terms of biological role, this protein is one of the two subunits of integration host factor, a specific DNA-binding protein that functions in genetic recombination as well as in transcriptional and translational control. In Hahella chejuensis (strain KCTC 2396), this protein is Integration host factor subunit beta.